We begin with the raw amino-acid sequence, 793 residues long: Probable phosphoketolase 2 (793 aa).

The protein belongs to the XFP family. Thiamine diphosphate serves as cofactor.

In Nostoc sp. (strain PCC 7120 / SAG 25.82 / UTEX 2576), this protein is Probable phosphoketolase 2.